Consider the following 268-residue polypeptide: Phosphatidylglycerol--prolipoprotein diacylglyceryl transferase (268 aa).

The next 7 membrane-spanning stretches (helical) occupy residues 10 to 30, 56 to 76, 92 to 112, 120 to 140, 174 to 194, 202 to 222, and 236 to 256; these read VALAIGPLKIHWYGLMYLIGI, LVFWLSMGVIVGGRLGYVLFY, WKGGMSFHGGFIGVMLAALWF, FFELMDFVAPLVPIGLGAGRI, PSQLYQFALEGVALFVILWLF, MAVSGMFSLCYGIFRFAVEFV, and WLTQGQLLCIPMIVGGLVLIW. Arg139 is a binding site for a 1,2-diacyl-sn-glycero-3-phospho-(1'-sn-glycerol).

Belongs to the Lgt family.

The protein localises to the cell inner membrane. The enzyme catalyses L-cysteinyl-[prolipoprotein] + a 1,2-diacyl-sn-glycero-3-phospho-(1'-sn-glycerol) = an S-1,2-diacyl-sn-glyceryl-L-cysteinyl-[prolipoprotein] + sn-glycerol 1-phosphate + H(+). It functions in the pathway protein modification; lipoprotein biosynthesis (diacylglyceryl transfer). Catalyzes the transfer of the diacylglyceryl group from phosphatidylglycerol to the sulfhydryl group of the N-terminal cysteine of a prolipoprotein, the first step in the formation of mature lipoproteins. This chain is Phosphatidylglycerol--prolipoprotein diacylglyceryl transferase, found in Pseudomonas putida (strain ATCC 47054 / DSM 6125 / CFBP 8728 / NCIMB 11950 / KT2440).